The following is a 204-amino-acid chain: GTP cyclohydrolase-2 (204 aa).

49 to 53 (RIHSE) lines the GTP pocket. Residues cysteine 54, cysteine 65, and cysteine 67 each contribute to the Zn(2+) site. GTP-binding positions include glutamine 70, 92-94 (EGR), and threonine 114. Residue aspartate 126 is the Proton acceptor of the active site. Catalysis depends on arginine 128, which acts as the Nucleophile. The GTP site is built by threonine 149 and lysine 154.

Belongs to the GTP cyclohydrolase II family. Zn(2+) serves as cofactor.

The enzyme catalyses GTP + 4 H2O = 2,5-diamino-6-hydroxy-4-(5-phosphoribosylamino)-pyrimidine + formate + 2 phosphate + 3 H(+). It participates in cofactor biosynthesis; riboflavin biosynthesis; 5-amino-6-(D-ribitylamino)uracil from GTP: step 1/4. Its function is as follows. Catalyzes the conversion of GTP to 2,5-diamino-6-ribosylamino-4(3H)-pyrimidinone 5'-phosphate (DARP), formate and pyrophosphate. This chain is GTP cyclohydrolase-2, found in Shewanella baltica (strain OS155 / ATCC BAA-1091).